The chain runs to 193 residues: Protein THEM6 (193 aa).

A signal peptide spans 1 to 18 (MSWLVVLLILYVIWDVNY). The N-linked (GlcNAc...) asparagine glycan is linked to N149.

The protein belongs to the THEM6 family.

It is found in the secreted. This Drosophila melanogaster (Fruit fly) protein is Protein THEM6.